The following is a 419-amino-acid chain: Tyrosine--tRNA ligase (419 aa).

Y34 lines the L-tyrosine pocket. The 'HIGH' region signature appears at P39 to H48. 2 residues coordinate L-tyrosine: Y168 and Q172. The 'KMSKS' region signature appears at K230 to S234. An ATP-binding site is contributed by K233. Residues A352–Y418 enclose the S4 RNA-binding domain.

The protein belongs to the class-I aminoacyl-tRNA synthetase family. TyrS type 1 subfamily. As to quaternary structure, homodimer.

The protein localises to the cytoplasm. The enzyme catalyses tRNA(Tyr) + L-tyrosine + ATP = L-tyrosyl-tRNA(Tyr) + AMP + diphosphate + H(+). Functionally, catalyzes the attachment of tyrosine to tRNA(Tyr) in a two-step reaction: tyrosine is first activated by ATP to form Tyr-AMP and then transferred to the acceptor end of tRNA(Tyr). This Listeria monocytogenes serotype 4b (strain F2365) protein is Tyrosine--tRNA ligase.